Here is a 624-residue protein sequence, read N- to C-terminus: Basal cell adhesion molecule (624 aa).

The first 25 residues, 1-25 (MEPPDARAGLLWLTLLLSGYSGAQA), serve as a signal peptide directing secretion. Ig-like V-type domains are found at residues 26-136 (ELHV…SSVR) and 141-251 (PEAT…HTFR). Topologically, residues 26–543 (ELHVSVPPRV…GSVAPQTAQA (518 aa)) are extracellular. Intrachain disulfides connect Cys47/Cys119, Cys166/Cys231, and Cys285/Cys331. Ig-like C2-type domains lie at 268-343 (PSTT…EEVQ), 357-436 (PLEL…QSFQ), and 443-534 (PELK…FHFG). N-linked (GlcNAc...) asparagine glycans are attached at residues Asn315, Asn371, and Asn378. 2 disulfides stabilise this stretch: Cys379/Cys419 and Cys468/Cys518. The interval 477–497 (KLTWSQRGDTTPAEPPFEGRG) is disordered. The chain crosses the membrane as a helical span at residues 544–564 (GVAVMAVAVSVGLLLLVVAAF). The Cytoplasmic portion of the chain corresponds to 565–624 (YCMRRKGRPGCCQRAEKGAPPAREPELSHSGSERPEHTGLLMGGPSGGGRGGNGGFGDEC). Residues 574–624 (GCCQRAEKGAPPAREPELSHSGSERPEHTGLLMGGPSGGGRGGNGGFGDEC) are disordered. Over residues 587-601 (REPELSHSGSERPEH) the composition is skewed to basic and acidic residues. Ser592, Ser594, and Ser596 each carry phosphoserine. A compositionally biased stretch (gly residues) spans 605–624 (LMGGPSGGGRGGNGGFGDEC).

Homodimer. Interacts with ITGA4:ITGB1. Interacts with spectrins SPTA1 and SPTB1.

Its subcellular location is the cell membrane. Its function is as follows. Transmembrane glycoprotein that functions as both a receptor and an adhesion molecule playing a crucial role in cell adhesion, motility, migration and invasion. Extracellular domain enables binding to extracellular matrix proteins, such as laminin, integrin and other ligands while its intracellular domain interacts with cytoskeletal proteins like hemoglobin, facilitating cell signal transduction. Serves as a receptor for laminin alpha-5/LAMA5 to promote cell adhesion. Mechanistically, JAK2 induces BCAM phosphorylation and activates its adhesion to laminin by stimulating a Rap1/AKT signaling pathway in the absence of EPOR. This is Basal cell adhesion molecule (Bcam) from Rattus norvegicus (Rat).